The chain runs to 313 residues: HTH-type transcriptional regulator CysB (313 aa).

One can recognise an HTH lysR-type domain in the interval 1-59 (MNLHQFRFVREAVRQNFNLTEAAKALYTSQPGVSKAIIELEDELGVEIFTRHGKRVRSL). The segment at residues 19 to 38 (LTEAAKALYTSQPGVSKAII) is a DNA-binding region (H-T-H motif).

The protein belongs to the LysR transcriptional regulatory family.

Functionally, transcriptional regulator preferentially involved in the control of sulfate transport and reduction. Binds to DNA at target promoter regions. The protein is HTH-type transcriptional regulator CysB of Burkholderia cenocepacia (strain ATCC BAA-245 / DSM 16553 / LMG 16656 / NCTC 13227 / J2315 / CF5610) (Burkholderia cepacia (strain J2315)).